Here is a 481-residue protein sequence, read N- to C-terminus: Dynein axonemal assembly factor 8 (481 aa).

Disordered regions lie at residues 70–91, 131–233, 306–397, and 415–454; these read DESG…LVPG, LDTK…EGRP, TWKV…PVAS, and RAFR…KKHI. Phosphoserine is present on residues S83, S145, and S147. Over residues 144–155 the composition is skewed to polar residues; that stretch reads GSQSPPWSSQGE. A compositionally biased stretch (basic and acidic residues) spans 163–176; that stretch reads GKLKTEPSDTDFKN. A compositionally biased stretch (basic residues) spans 177–188; that stretch reads SAKRRALRRERR. The segment covering 198 to 211 has biased composition (polar residues); the sequence is KVTQAAQNPASGDQ. Positions 310 to 322 are enriched in basic and acidic residues; that stretch reads SADKLQDTEEQVA. Positions 323 to 336 are enriched in polar residues; sequence RTRSASAESGFQTE. S328 carries the post-translational modification Phosphoserine. 2 stretches are compositionally biased toward basic and acidic residues: residues 337-349 and 359-380; these read RVQK…RLKT and RLTE…HSSS.

It localises to the dynein axonemal particle. The protein localises to the cytoplasm. Its function is as follows. In cyliated cells, dynein axonemal particle-specific protein required for deployment of ODA to the axoneme. Interacts with outer dynein arm (ODA) subunits. The protein is Dynein axonemal assembly factor 8 (Dnaaf8) of Rattus norvegicus (Rat).